Consider the following 466-residue polypeptide: 3-isopropylmalate dehydratase large subunit (466 aa).

3 residues coordinate [4Fe-4S] cluster: cysteine 347, cysteine 407, and cysteine 410.

It belongs to the aconitase/IPM isomerase family. LeuC type 1 subfamily. In terms of assembly, heterodimer of LeuC and LeuD. The cofactor is [4Fe-4S] cluster.

The enzyme catalyses (2R,3S)-3-isopropylmalate = (2S)-2-isopropylmalate. It participates in amino-acid biosynthesis; L-leucine biosynthesis; L-leucine from 3-methyl-2-oxobutanoate: step 2/4. Catalyzes the isomerization between 2-isopropylmalate and 3-isopropylmalate, via the formation of 2-isopropylmaleate. The protein is 3-isopropylmalate dehydratase large subunit of Klebsiella pneumoniae subsp. pneumoniae (strain ATCC 700721 / MGH 78578).